We begin with the raw amino-acid sequence, 476 residues long: Glycogen synthase (476 aa).

Residue lysine 15 coordinates ADP-alpha-D-glucose.

This sequence belongs to the glycosyltransferase 1 family. Bacterial/plant glycogen synthase subfamily.

The enzyme catalyses [(1-&gt;4)-alpha-D-glucosyl](n) + ADP-alpha-D-glucose = [(1-&gt;4)-alpha-D-glucosyl](n+1) + ADP + H(+). The protein operates within glycan biosynthesis; glycogen biosynthesis. Functionally, synthesizes alpha-1,4-glucan chains using ADP-glucose. The protein is Glycogen synthase of Halalkalibacterium halodurans (strain ATCC BAA-125 / DSM 18197 / FERM 7344 / JCM 9153 / C-125) (Bacillus halodurans).